The sequence spans 560 residues: Serine/threonine-protein kinase TOS3 (560 aa).

A Protein kinase domain is found at 50–344 (FEILATLGNG…LADIKVHPFM (295 aa)). ATP-binding positions include 56–64 (LGNGQYGKV) and K79. D189 serves as the catalytic Proton acceptor.

It belongs to the protein kinase superfamily. Ser/Thr protein kinase family. In terms of processing, autophosphorylated.

The catalysed reaction is L-seryl-[protein] + ATP = O-phospho-L-seryl-[protein] + ADP + H(+). It carries out the reaction L-threonyl-[protein] + ATP = O-phospho-L-threonyl-[protein] + ADP + H(+). Functionally, one of the three SNF1 protein kinases (with SAK1 and ELM1) which are required for growth on nonfermentable carbon sources and nonpreferred sugars and for response to environmental stress. Activates SNF1 by phosphorylation of its activation-loop 'Thr-210'. Required for the regulation by SNF1 of the transcription of a large set of genes, the modification the activity of metabolic enzymes, and the control of various nutrient-responsive cellular developmental processes. Also phosphorylates GAL83, MIG1 and SIP2. This Saccharomyces cerevisiae (strain YJM789) (Baker's yeast) protein is Serine/threonine-protein kinase TOS3 (TOS3).